We begin with the raw amino-acid sequence, 723 residues long: Phenylalanine ammonia-lyase (723 aa).

The active-site Proton donor/acceptor is Y77. Positions 182–184 form a cross-link, 5-imidazolinone (Ala-Gly); the sequence is ASG. At S183 the chain carries 2,3-didehydroalanine (Ser). Residues N241, Q336, R342, N372, K443, E471, and N474 each coordinate (E)-cinnamate.

The protein belongs to the PAL/histidase family. Contains an active site 4-methylidene-imidazol-5-one (MIO), which is formed autocatalytically by cyclization and dehydration of residues Ala-Ser-Gly.

It localises to the cytoplasm. It catalyses the reaction L-phenylalanine = (E)-cinnamate + NH4(+). It functions in the pathway secondary metabolite biosynthesis. Its pathway is phenylpropanoid metabolism; trans-cinnamate biosynthesis; trans-cinnamate from L-phenylalanine: step 1/1. In terms of biological role, phenylalanine ammonia-lyase; part of the gene cluster that mediates the biosynthesis of squalestatin S1 (SQS1, also known as zaragozic acid A), a heavily oxidized fungal polyketide that offers potent cholesterol lowering activity by targeting squalene synthase (SS). SQS1 is composed of a 2,8-dioxobicyclic[3.2.1]octane-3,4,5-tricarboxyclic acid core that is connected to two lipophilic polyketide arms. These initial steps feature the priming of an unusual benzoic acid starter unit onto the highly reducing polyketide synthase clz14, followed by oxaloacetate extension and product release to generate a tricarboxylic acid containing product. The phenylalanine ammonia lyase (PAL) clz10 and the acyl-CoA ligase clz12 are involved in transforming phenylalanine into benzoyl-CoA. The citrate synthase-like protein clz17 is involved in connecting the C-alpha-carbons of the hexaketide chain and oxaloacetate to afford the tricarboxylic acid unit. The potential hydrolytic enzymes, clz11 and clz13, are in close proximity to pks2 and may participate in product release. On the other side, the tetraketide arm is synthesized by a the squalestatin tetraketide synthase clz2 and enzymatically esterified to the core in the last biosynthetic step, by the acetyltransferase clz6. The biosynthesis of the tetraketide must involve 3 rounds of chain extension. After the first and second rounds methyl-transfer occurs, and in all rounds of extension the ketoreductase and dehydratase are active. The enoyl reductase and C-MeT of clz2 are not active in the final round of extension. The acetyltransferase clz6 appears to have a broad substrate selectivity for its acyl CoA substrate, allowing the in vitro synthesis of novel squalestatins. The biosynthesis of SQS1 requires several oxidative steps likely performed by oxidoreductases clz3, clz15 and clz16. Finally, in support of the identification of the cluster as being responsible for SQS1 production, the cluster contains a gene encoding a putative squalene synthase (SS) clz20, suggesting a likely mechanism for self-resistance. The sequence is that of Phenylalanine ammonia-lyase from Cochliobolus lunatus (Filamentous fungus).